The primary structure comprises 122 residues: Flagellar hook-basal body complex protein FliE (122 aa).

It belongs to the FliE family.

The protein localises to the bacterial flagellum basal body. The chain is Flagellar hook-basal body complex protein FliE from Marinobacter nauticus (strain ATCC 700491 / DSM 11845 / VT8) (Marinobacter aquaeolei).